Consider the following 358-residue polypeptide: Protein SGT1 homolog B (358 aa).

TPR repeat units follow at residues A2–C35, A37–L69, and A70–E103. The 90-residue stretch at K157–E246 folds into the CS domain. A disordered region spans residues P255–A275. Residues V268 to Y358 form the SGS domain.

The protein belongs to the SGT1 family. Interacts with RAR1 and HSP90-2. Interacts (via SGS domain) with HSC70-1 and HSC70-3.

It is found in the cytoplasm. Its subcellular location is the nucleus. In terms of biological role, involved in plant innate immunity. Essential for race-specific resistance conferred by multiple R genes, including RPP7, recognizing different oomycete pathogen isolates like avirulent Hyaloperonospora arabidopsidis (downy mildew). Contributes additively with RAR1 to RPP5-dependent resistance. Not required for RPM1, RPS2, RPS4 and RPS5-mediated resistance. Functions as a negative regulator of RPS5 accumulation by assisting its degradation. May be involved in heat shock response by associating with HSC70-1 chaperone. Required for the SCF(TIR1)-mediated degradation of Aux/IAA proteins, but maybe not for SCF(TIR1) assembly or binding to its Aux/IAA substrates. Probably required for SCF-mediated ubiquitination, by coupling HSP90 to SCF complex for ubiquitination of HSP90 client proteins. Required for the coronatine/jasmonic acid-mediated signal transduction pathway. The sequence is that of Protein SGT1 homolog B from Arabidopsis thaliana (Mouse-ear cress).